The following is a 349-amino-acid chain: Anthranilate phosphoribosyltransferase (349 aa).

5-phospho-alpha-D-ribose 1-diphosphate contacts are provided by residues G82, 85–86 (GD), 92–95 (NVST), 110–118 (KHGNRAVSG), and S122. G82 contacts anthranilate. S94 serves as a coordination point for Mg(2+). Residue N113 participates in anthranilate binding. Anthranilate is bound at residue R168. 2 residues coordinate Mg(2+): D227 and E228.

Belongs to the anthranilate phosphoribosyltransferase family. In terms of assembly, homodimer. Requires Mg(2+) as cofactor.

It catalyses the reaction N-(5-phospho-beta-D-ribosyl)anthranilate + diphosphate = 5-phospho-alpha-D-ribose 1-diphosphate + anthranilate. The protein operates within amino-acid biosynthesis; L-tryptophan biosynthesis; L-tryptophan from chorismate: step 2/5. Functionally, catalyzes the transfer of the phosphoribosyl group of 5-phosphorylribose-1-pyrophosphate (PRPP) to anthranilate to yield N-(5'-phosphoribosyl)-anthranilate (PRA). This Pseudomonas fluorescens (strain SBW25) protein is Anthranilate phosphoribosyltransferase.